The chain runs to 218 residues: Large ribosomal subunit protein bL25 (218 aa).

This sequence belongs to the bacterial ribosomal protein bL25 family. CTC subfamily. In terms of assembly, part of the 50S ribosomal subunit; part of the 5S rRNA/L5/L18/L25 subcomplex. Contacts the 5S rRNA. Binds to the 5S rRNA independently of L5 and L18.

This is one of the proteins that binds to the 5S RNA in the ribosome where it forms part of the central protuberance. The sequence is that of Large ribosomal subunit protein bL25 from Polaromonas naphthalenivorans (strain CJ2).